The primary structure comprises 529 residues: MGADLKQPQDADSPPKGVSRRRFLTTGAAAVVGTGVGAGGTALLSSHPRGPAVWYQRGRSGAPPVGGLHLQFGRNASTEMVVSWHTTDTVGNPRVMLGTPTSGFGSVVVAETRSYRDAKSNTEVRVNHAHLTNLTPDTDYVYAAVHDGTTPELGTARTAPSGRKPLRFTSFGDQSTPALGRLADGRYVSDNIGSPFAGDITIAIERIAPLFNLINGDLCYANLAQDRIRTWSDWFDNNTRSARYRPWMPAAGNHENEVGNGPIGYDAYQTYFAVPDSGSSPQLRGLWYSFTAGSVRVISLHNDDVCYQDGGNSYVRGYSGGEQRRWLQAELANARRDSEIDWVVVCMHQTAISTADDNNGADLGIRQEWLPLFDQYQVDLVVCGHEHHYERSHPLRGALGTDTRTPIPVDTRSDLIDSTRGTVHLVIGGGGTSKPTNALLFPQPRCQVITGVGDFDPAIRRKPSIFVLEDAPWSAFRDRDNPYGFVAFDVDPGQPGGTTSIKATYYAVTGPFGGLTVIDQFTLTKPRGG.

The disordered stretch occupies residues 1 to 20 (MGADLKQPQDADSPPKGVSR). The segment at residues 1–52 (MGADLKQPQDADSPPKGVSRRRFLTTGAAAVVGTGVGAGGTALLSSHPRGPA) is a signal peptide (tat-type signal).

In terms of processing, predicted to be exported by the Tat system. The position of the signal peptide cleavage has not been experimentally proven.

This is an uncharacterized protein from Mycobacterium tuberculosis (strain CDC 1551 / Oshkosh).